A 104-amino-acid polypeptide reads, in one-letter code: Precursor of CEP11 (104 aa).

A signal peptide spans 1 to 27 (MAKTRRVIYLFLTIVLLFCELIDEAQG). Residues 28 to 85 (SRFRCHHSEDYSCKKRSSHHHHHHHHHQQQQHHHKDTPPEELQGSIKTRRSKDIYGLN) constitute a propeptide that is removed on maturation. The tract at residues 37–104 (DYSCKKRSSH…SPGVGHLIKT (68 aa)) is disordered. The segment covering 41–62 (KKRSSHHHHHHHHHQQQQHHHK) has biased composition (basic residues). Hydroxyproline occurs at positions 92 and 96. Positions 101–104 (LIKT) are excised as a propeptide.

It belongs to the C-terminally encoded plant signaling peptide (CEP) family. In terms of assembly, interacts with CEP receptors (e.g. CEPR1 and CEPR2). Post-translationally, the mature small signaling peptide is generated by proteolytic processing of the longer precursor. Expressed in lateral root primordia and in lateral roots excluding the meristem region.

The protein resides in the secreted. The protein localises to the extracellular space. It is found in the apoplast. In terms of biological role, extracellular signaling peptide that may regulate primary root growth rate and systemic nitrogen (N)-demand signaling. Mediates up-regulation of genes involved in N uptake and assimilation pathways. The polypeptide is Precursor of CEP11 (Arabidopsis thaliana (Mouse-ear cress)).